The primary structure comprises 256 residues: Small ribosomal subunit protein eS1A (256 aa).

The residue at position 2 (A2) is an N-acetylalanine; partial.

It belongs to the eukaryotic ribosomal protein eS1 family. In terms of assembly, component of the small ribosomal subunit. Mature ribosomes consist of a small (40S) and a large (60S) subunit. The 40S subunit contains about 33 different proteins and 1 molecule of RNA (18S). The 60S subunit contains about 49 different proteins and 3 molecules of RNA (25S, 5.8S and 5S).

The protein localises to the cytoplasm. This chain is Small ribosomal subunit protein eS1A, found in Scheffersomyces stipitis (strain ATCC 58785 / CBS 6054 / NBRC 10063 / NRRL Y-11545) (Yeast).